Consider the following 316-residue polypeptide: UDP-N-acetylenolpyruvoylglucosamine reductase (316 aa).

The region spanning 30 to 194 (VGGEADYLVF…LSVKFALAPG (165 aa)) is the FAD-binding PCMH-type domain. Arginine 173 is a catalytic residue. Serine 223 serves as the catalytic Proton donor. Glutamate 293 is an active-site residue.

Belongs to the MurB family. The cofactor is FAD.

It is found in the cytoplasm. The catalysed reaction is UDP-N-acetyl-alpha-D-muramate + NADP(+) = UDP-N-acetyl-3-O-(1-carboxyvinyl)-alpha-D-glucosamine + NADPH + H(+). Its pathway is cell wall biogenesis; peptidoglycan biosynthesis. Functionally, cell wall formation. This Streptococcus pneumoniae serotype 2 (strain D39 / NCTC 7466) protein is UDP-N-acetylenolpyruvoylglucosamine reductase.